Consider the following 679-residue polypeptide: DNA-directed RNA polymerase subunit beta' (679 aa).

Residues Cys-69, Cys-71, Cys-87, and Cys-90 each coordinate Zn(2+). The Mg(2+) site is built by Asp-489, Asp-491, and Asp-493.

It belongs to the RNA polymerase beta' chain family. RpoC1 subfamily. In plastids the minimal PEP RNA polymerase catalytic core is composed of four subunits: alpha, beta, beta', and beta''. When a (nuclear-encoded) sigma factor is associated with the core the holoenzyme is formed, which can initiate transcription. The cofactor is Mg(2+). Zn(2+) serves as cofactor.

It is found in the plastid. Its subcellular location is the chloroplast. It carries out the reaction RNA(n) + a ribonucleoside 5'-triphosphate = RNA(n+1) + diphosphate. Functionally, DNA-dependent RNA polymerase catalyzes the transcription of DNA into RNA using the four ribonucleoside triphosphates as substrates. The chain is DNA-directed RNA polymerase subunit beta' from Phalaenopsis aphrodite subsp. formosana (Moth orchid).